The sequence spans 153 residues: Endoribonuclease YbeY (153 aa).

3 residues coordinate Zn(2+): His114, His118, and His124.

It belongs to the endoribonuclease YbeY family. Zn(2+) is required as a cofactor.

It localises to the cytoplasm. Single strand-specific metallo-endoribonuclease involved in late-stage 70S ribosome quality control and in maturation of the 3' terminus of the 16S rRNA. The polypeptide is Endoribonuclease YbeY (Shewanella baltica (strain OS223)).